We begin with the raw amino-acid sequence, 421 residues long: ATP-dependent RNA helicase RhlB (421 aa).

The Q motif motif lies at 9-37 (QKFSDFALHPQVVEALEKKGFYNCTPIQA). The region spanning 40–219 (LPLTLAGRDV…FEQMNNAEYV (180 aa)) is the Helicase ATP-binding domain. 53-60 (AQTGTGKT) provides a ligand contact to ATP. A DEAD box motif is present at residues 165-168 (DEAD). A Helicase C-terminal domain is found at 245–390 (RLLQTLIEEE…VSKYNPEALM (146 aa)). The segment at 396-421 (PLRLTRSRPGNGPRRAGAPRNRRRSG) is disordered. The segment covering 402–414 (SRPGNGPRRAGAP) has biased composition (low complexity).

It belongs to the DEAD box helicase family. RhlB subfamily. In terms of assembly, component of the RNA degradosome, which is a multiprotein complex involved in RNA processing and mRNA degradation.

Its subcellular location is the cytoplasm. It catalyses the reaction ATP + H2O = ADP + phosphate + H(+). Its function is as follows. DEAD-box RNA helicase involved in RNA degradation. Has RNA-dependent ATPase activity and unwinds double-stranded RNA. The polypeptide is ATP-dependent RNA helicase RhlB (Salmonella agona (strain SL483)).